The chain runs to 186 residues: Ribosome-recycling factor (186 aa).

The protein belongs to the RRF family.

The protein resides in the cytoplasm. Functionally, responsible for the release of ribosomes from messenger RNA at the termination of protein biosynthesis. May increase the efficiency of translation by recycling ribosomes from one round of translation to another. The chain is Ribosome-recycling factor from Ralstonia nicotianae (strain ATCC BAA-1114 / GMI1000) (Ralstonia solanacearum).